A 106-amino-acid polypeptide reads, in one-letter code: Thioredoxin-2 (106 aa).

The Thioredoxin domain maps to 1 to 106; that stretch reads MVYQVKDKAD…RLEDVIKANI (106 aa). Catalysis depends on nucleophile residues cysteine 32 and cysteine 35. A disulfide bridge connects residues cysteine 32 and cysteine 35.

Belongs to the thioredoxin family. As to quaternary structure, monomer.

Its function is as follows. Participates in various redox reactions through the reversible oxidation of its active center dithiol to a disulfide and catalyzes dithiol-disulfide exchange reactions. As a reducing substrate of peroxiredoxin 1, thioredoxin 2 is preferred over thioredoxin 1. This Drosophila melanogaster (Fruit fly) protein is Thioredoxin-2.